Here is a 104-residue protein sequence, read N- to C-terminus: L-rhamnose mutarotase (104 aa).

Y18 lines the substrate pocket. H22 (proton donor) is an active-site residue. Substrate contacts are provided by residues Y41 and 76–77 (WW).

Belongs to the rhamnose mutarotase family. As to quaternary structure, homodimer.

The protein resides in the cytoplasm. The catalysed reaction is alpha-L-rhamnose = beta-L-rhamnose. The protein operates within carbohydrate metabolism; L-rhamnose metabolism. In terms of biological role, involved in the anomeric conversion of L-rhamnose. The protein is L-rhamnose mutarotase of Mannheimia succiniciproducens (strain KCTC 0769BP / MBEL55E).